The sequence spans 261 residues: Cytochrome c oxidase subunit 3 (261 aa).

The Mitochondrial matrix segment spans residues 1–15; that stretch reads MTKQMHAFHMVNPSP. Residues 16 to 34 traverse the membrane as a helical segment; it reads WPLTGAASAFMLTSGLAMW. Topologically, residues 35–40 are mitochondrial intermembrane; sequence FHKHSN. The chain crosses the membrane as a helical span at residues 41–66; that stretch reads TLIFLSMILMLLTMYQWWRDITREGT. At 67–72 the chain is on the mitochondrial matrix side; that stretch reads FQGHHT. The chain crosses the membrane as a helical span at residues 73–105; the sequence is SLVQKSLRYGMILFIVSEVCFFFGFFWTFYHSS. Topologically, residues 106–128 are mitochondrial intermembrane; sequence LSPSPDLGMMWPPKGVIPLDPFE. The helical transmembrane segment at 129–152 threads the bilayer; that stretch reads IPLLNTAILLGSGVSVTWAHHSLM. The Mitochondrial matrix portion of the chain corresponds to 153-155; sequence EKT. The helical transmembrane segment at 156–183 threads the bilayer; it reads HKDMVISLSITIILGIYFTLLQGMEYFN. At 184-190 the chain is on the mitochondrial intermembrane side; that stretch reads STFNISD. Residues 191-223 traverse the membrane as a helical segment; that stretch reads NAYGSTFFVATGFHGGHVIIGTLFLTVCLLRQL. At 224 to 232 the chain is on the mitochondrial matrix side; sequence MFHFTSSHH. A helical membrane pass occupies residues 233–256; sequence FGFEAAAWYWHFVDVVWLFLFISI. Over 257–261 the chain is Mitochondrial intermembrane; sequence YWWGS.

Belongs to the cytochrome c oxidase subunit 3 family. Component of the cytochrome c oxidase (complex IV, CIV), a multisubunit enzyme composed of 14 subunits. The complex is composed of a catalytic core of 3 subunits MT-CO1, MT-CO2 and MT-CO3, encoded in the mitochondrial DNA, and 11 supernumerary subunits COX4I, COX5A, COX5B, COX6A, COX6B, COX6C, COX7A, COX7B, COX7C, COX8 and NDUFA4, which are encoded in the nuclear genome. The complex exists as a monomer or a dimer and forms supercomplexes (SCs) in the inner mitochondrial membrane with NADH-ubiquinone oxidoreductase (complex I, CI) and ubiquinol-cytochrome c oxidoreductase (cytochrome b-c1 complex, complex III, CIII), resulting in different assemblies (supercomplex SCI(1)III(2)IV(1) and megacomplex MCI(2)III(2)IV(2)).

Its subcellular location is the mitochondrion inner membrane. The enzyme catalyses 4 Fe(II)-[cytochrome c] + O2 + 8 H(+)(in) = 4 Fe(III)-[cytochrome c] + 2 H2O + 4 H(+)(out). Functionally, component of the cytochrome c oxidase, the last enzyme in the mitochondrial electron transport chain which drives oxidative phosphorylation. The respiratory chain contains 3 multisubunit complexes succinate dehydrogenase (complex II, CII), ubiquinol-cytochrome c oxidoreductase (cytochrome b-c1 complex, complex III, CIII) and cytochrome c oxidase (complex IV, CIV), that cooperate to transfer electrons derived from NADH and succinate to molecular oxygen, creating an electrochemical gradient over the inner membrane that drives transmembrane transport and the ATP synthase. Cytochrome c oxidase is the component of the respiratory chain that catalyzes the reduction of oxygen to water. Electrons originating from reduced cytochrome c in the intermembrane space (IMS) are transferred via the dinuclear copper A center (CU(A)) of subunit 2 and heme A of subunit 1 to the active site in subunit 1, a binuclear center (BNC) formed by heme A3 and copper B (CU(B)). The BNC reduces molecular oxygen to 2 water molecules using 4 electrons from cytochrome c in the IMS and 4 protons from the mitochondrial matrix. The polypeptide is Cytochrome c oxidase subunit 3 (MT-CO3) (Myxine glutinosa (Atlantic hagfish)).